Consider the following 69-residue polypeptide: DNA-directed RNA polymerase subunit omega (69 aa).

Belongs to the RNA polymerase subunit omega family. In terms of assembly, the RNAP catalytic core consists of 2 alpha, 1 beta, 1 beta' and 1 omega subunit. When a sigma factor is associated with the core the holoenzyme is formed, which can initiate transcription.

It catalyses the reaction RNA(n) + a ribonucleoside 5'-triphosphate = RNA(n+1) + diphosphate. Its function is as follows. Promotes RNA polymerase assembly. Latches the N- and C-terminal regions of the beta' subunit thereby facilitating its interaction with the beta and alpha subunits. The polypeptide is DNA-directed RNA polymerase subunit omega (Symbiobacterium thermophilum (strain DSM 24528 / JCM 14929 / IAM 14863 / T)).